Consider the following 396-residue polypeptide: Obg-like ATPase 1 (396 aa).

Residues 23-283 form the OBG-type G domain; that stretch reads LKIGIVGLPN…MSAEEKQKYL (261 aa). ATP is bound at residue 32 to 37; that stretch reads NVGKST. 2 residues coordinate Mg(2+): Ser36 and Thr56. Residue Leu231 coordinates ATP. Residues 267 to 274 carry the Nuclear export signal motif; sequence LELKLQDM. The 84-residue stretch at 304–387 folds into the TGS domain; sequence QLEYFFTAGP…EDGDIIFFKF (84 aa).

It belongs to the TRAFAC class OBG-HflX-like GTPase superfamily. OBG GTPase family. YchF/OLA1 subfamily. As to quaternary structure, monomer. Mg(2+) is required as a cofactor.

The protein localises to the cytoplasm. It localises to the nucleus. The protein resides in the nucleolus. Its function is as follows. Hydrolyzes ATP, and can also hydrolyze GTP with lower efficiency. Has lower affinity for GTP. This is Obg-like ATPase 1 from Gallus gallus (Chicken).